The primary structure comprises 397 residues: Elongation factor Tu (397 aa).

Residues 10-206 (KPHVNIGTIG…AVDSYIPTPE (197 aa)) enclose the tr-type G domain. Positions 19-26 (GHVDHGKT) are G1. 19–26 (GHVDHGKT) contributes to the GTP binding site. T26 provides a ligand contact to Mg(2+). Residues 60-64 (GITIN) form a G2 region. A G3 region spans residues 81-84 (DCPG). GTP-binding positions include 81 to 85 (DCPGH) and 136 to 139 (NKAD). The tract at residues 136–139 (NKAD) is G4. A G5 region spans residues 174 to 176 (SAL).

The protein belongs to the TRAFAC class translation factor GTPase superfamily. Classic translation factor GTPase family. EF-Tu/EF-1A subfamily. Monomer.

The protein localises to the cytoplasm. The enzyme catalyses GTP + H2O = GDP + phosphate + H(+). Functionally, GTP hydrolase that promotes the GTP-dependent binding of aminoacyl-tRNA to the A-site of ribosomes during protein biosynthesis. This Clostridium perfringens (strain ATCC 13124 / DSM 756 / JCM 1290 / NCIMB 6125 / NCTC 8237 / Type A) protein is Elongation factor Tu.